Here is a 251-residue protein sequence, read N- to C-terminus: Ubiquinone/menaquinone biosynthesis C-methyltransferase UbiE (251 aa).

Residues threonine 74, aspartate 95, 123–124 (NA), and serine 140 contribute to the S-adenosyl-L-methionine site.

The protein belongs to the class I-like SAM-binding methyltransferase superfamily. MenG/UbiE family.

It carries out the reaction a 2-demethylmenaquinol + S-adenosyl-L-methionine = a menaquinol + S-adenosyl-L-homocysteine + H(+). The catalysed reaction is a 2-methoxy-6-(all-trans-polyprenyl)benzene-1,4-diol + S-adenosyl-L-methionine = a 5-methoxy-2-methyl-3-(all-trans-polyprenyl)benzene-1,4-diol + S-adenosyl-L-homocysteine + H(+). Its pathway is quinol/quinone metabolism; menaquinone biosynthesis; menaquinol from 1,4-dihydroxy-2-naphthoate: step 2/2. It participates in cofactor biosynthesis; ubiquinone biosynthesis. Functionally, methyltransferase required for the conversion of demethylmenaquinol (DMKH2) to menaquinol (MKH2) and the conversion of 2-polyprenyl-6-methoxy-1,4-benzoquinol (DDMQH2) to 2-polyprenyl-3-methyl-6-methoxy-1,4-benzoquinol (DMQH2). In Salmonella arizonae (strain ATCC BAA-731 / CDC346-86 / RSK2980), this protein is Ubiquinone/menaquinone biosynthesis C-methyltransferase UbiE.